Here is a 518-residue protein sequence, read N- to C-terminus: MEFLMDPSIWAGLLTLVVLEIVLGIDNLVFIAILADKLPPKQRDKARLLGLSLALIMRLGLLSLISWMVTLTKPLFTVMDFSFSGRDLIMLFGGIFLLFKATTELHERLENRDHDSGHGKGYASFWVVVTQIVILDAVFSLDAVITAVGMVNHLPVMMAAVVIAMAVMLLASKPLTRFVNQHPTVVVLCLSFLLMIGLSLVAEGFGFHIPKGYLYAAIGFSIIIEVFNQIARRNFIRHQSTLPLRARTADAILRLMGGKRQANVQHDADNPMPMPIPEGAFAEEERYMINGVLTLASRSLRGIMTPRGEISWVDANLGVDEIREQLLSSPHSLFPVCRGELDEIIGIVRAKELLVALEEGVDVAAIASASPAIIVPETLDPINLLGVLRRARGSFVIVTNEFGVVQGLVTPLDVLEAIAGEFPDADETPEIITDGDGWLVKGGTDLHALQQALDVEHLADDDDIATVAGLVISANGHIPRVGDVIDVGPLHITIIEANDYRVDLVRIVKEQPAHDEDE.

Topologically, residues 1–13 (MEFLMDPSIWAGL) are cytoplasmic. The helical transmembrane segment at 14–34 (LTLVVLEIVLGIDNLVFIAIL) threads the bilayer. Over 35–48 (ADKLPPKQRDKARL) the chain is Periplasmic. A helical transmembrane segment spans residues 49–69 (LGLSLALIMRLGLLSLISWMV). Over 70-78 (TLTKPLFTV) the chain is Cytoplasmic. The chain crosses the membrane as a helical span at residues 79 to 99 (MDFSFSGRDLIMLFGGIFLLF). The Periplasmic segment spans residues 100–124 (KATTELHERLENRDHDSGHGKGYAS). A helical membrane pass occupies residues 125 to 145 (FWVVVTQIVILDAVFSLDAVI). The Cytoplasmic portion of the chain corresponds to 146 to 149 (TAVG). A helical transmembrane segment spans residues 150 to 170 (MVNHLPVMMAAVVIAMAVMLL). Residues 171–184 (ASKPLTRFVNQHPT) are Periplasmic-facing. A helical transmembrane segment spans residues 185-205 (VVVLCLSFLLMIGLSLVAEGF). Residue Gly206 is a topological domain, cytoplasmic. Residues 207–227 (FHIPKGYLYAAIGFSIIIEVF) traverse the membrane as a helical segment. The Periplasmic segment spans residues 228-354 (NQIARRNFIR…IGIVRAKELL (127 aa)). CBS domains lie at 304–363 (MTPR…GVDV) and 367–427 (ASAS…DADE). The helical transmembrane segment at 355-375 (VALEEGVDVAAIASASPAIIV) threads the bilayer. Over 376–518 (PETLDPINLL…KEQPAHDEDE (143 aa)) the chain is Cytoplasmic.

This sequence belongs to the UPF0053 family.

The protein resides in the cell inner membrane. The chain is UPF0053 inner membrane protein YoaE (yoaE) from Escherichia coli O157:H7.